The sequence spans 472 residues: MAGKTLYDKLWDDHLVKQRDDGSALIYIDRQLLHEVTSPQAFEGLRLAGRKPWRIDANIATPDHNVPTTDRDKGIDGIVDPVSRTQVETLDKNCDEFGILEFKIKDQRQGIVHVIGPEQGATLPGMSIVCGDSHTSTHGAFGCLAHGIGTSEVEHVLATQCLVQKKMKNMLVKVNGKLGAGVTGKDVVLAIIGKIGTAGGTGYAIEFGGEAIRGLSMEGRMTICNMSIEAGARVGMVAVDDTTIEYVKGRPFSPKGETWDKAVEYWRTLHSDDDAVFDKVVELDGSAIQPQVSWGTSPEMVVGVEGAVPDPAKEEDPIKREGIVRALKYMGLQPNQKITDIKLDRVFIGSCTNSRIEDLREAAAVVKGRKVAASLKQAMVVPGSGLVKAQAEQEGLDKVFIEAGLEWRDPGCSMCLAMNADKLGQGEHCASTSNRNFEGRQGFGGRTHLVSPAMAAAAAVTGHFVDVRELMN.

Residues C351, C412, and C415 each contribute to the [4Fe-4S] cluster site.

Belongs to the aconitase/IPM isomerase family. LeuC type 1 subfamily. Heterodimer of LeuC and LeuD. Requires [4Fe-4S] cluster as cofactor.

It carries out the reaction (2R,3S)-3-isopropylmalate = (2S)-2-isopropylmalate. Its pathway is amino-acid biosynthesis; L-leucine biosynthesis; L-leucine from 3-methyl-2-oxobutanoate: step 2/4. Its function is as follows. Catalyzes the isomerization between 2-isopropylmalate and 3-isopropylmalate, via the formation of 2-isopropylmaleate. In Marinobacter nauticus (strain ATCC 700491 / DSM 11845 / VT8) (Marinobacter aquaeolei), this protein is 3-isopropylmalate dehydratase large subunit.